Here is a 475-residue protein sequence, read N- to C-terminus: UDP-N-acetylmuramate--L-alanine ligase (475 aa).

Gly125–Thr131 is an ATP binding site.

Belongs to the MurCDEF family.

It localises to the cytoplasm. It carries out the reaction UDP-N-acetyl-alpha-D-muramate + L-alanine + ATP = UDP-N-acetyl-alpha-D-muramoyl-L-alanine + ADP + phosphate + H(+). It functions in the pathway cell wall biogenesis; peptidoglycan biosynthesis. Cell wall formation. This chain is UDP-N-acetylmuramate--L-alanine ligase, found in Actinobacillus pleuropneumoniae serotype 7 (strain AP76).